The chain runs to 750 residues: Photosystem I P700 chlorophyll a apoprotein A1 (750 aa).

Helical transmembrane passes span 70–93 (VFSA…FHGA), 156–179 (LYCT…FHYH), 195–219 (LNHH…HVSL), 291–309 (IAHH…GHMY), 346–369 (WHAQ…HHMY), 385–411 (LSLF…IFMV), 433–455 (AIIS…LYIH), and 531–549 (FLVH…LILL). Residues Cys573 and Cys582 each coordinate [4Fe-4S] cluster. The next 2 membrane-spanning stretches (helical) occupy residues 589-610 (HVFL…HFSW) and 664-686 (LSAY…MFLF). His675 provides a ligand contact to chlorophyll a'. Residues Met683 and Tyr691 each coordinate chlorophyll a. Phylloquinone is bound at residue Trp692. Residues 724–744 (AVGVTHYLLGGIATTWAFFLA) traverse the membrane as a helical segment.

This sequence belongs to the PsaA/PsaB family. The PsaA/B heterodimer binds the P700 chlorophyll special pair and subsequent electron acceptors. PSI consists of a core antenna complex that captures photons, and an electron transfer chain that converts photonic excitation into a charge separation. The eukaryotic PSI reaction center is composed of at least 11 subunits. P700 is a chlorophyll a/chlorophyll a' dimer, A0 is one or more chlorophyll a, A1 is one or both phylloquinones and FX is a shared 4Fe-4S iron-sulfur center. serves as cofactor.

The protein localises to the plastid. Its subcellular location is the chloroplast thylakoid membrane. The enzyme catalyses reduced [plastocyanin] + hnu + oxidized [2Fe-2S]-[ferredoxin] = oxidized [plastocyanin] + reduced [2Fe-2S]-[ferredoxin]. Functionally, psaA and PsaB bind P700, the primary electron donor of photosystem I (PSI), as well as the electron acceptors A0, A1 and FX. PSI is a plastocyanin-ferredoxin oxidoreductase, converting photonic excitation into a charge separation, which transfers an electron from the donor P700 chlorophyll pair to the spectroscopically characterized acceptors A0, A1, FX, FA and FB in turn. Oxidized P700 is reduced on the lumenal side of the thylakoid membrane by plastocyanin. The protein is Photosystem I P700 chlorophyll a apoprotein A1 of Nasturtium officinale (Watercress).